Consider the following 632-residue polypeptide: Cytoplasmic polyadenylation element-binding protein 3 (632 aa).

Over residues 1 to 11 (MQDDLLMDKSK) the composition is skewed to basic and acidic residues. Disordered regions lie at residues 1–89 (MQDD…TGGS) and 127–212 (FSPQ…RRAV). Residues 13–48 (QQRQQPQQPPSSQTQQQQKEAASVAEPPSSRESSPP) are compositionally biased toward low complexity. Polar residues-rich tracts occupy residues 65 to 89 (SFQQ…TGGS) and 135 to 169 (HQTQ…LTNK). Over residues 170–193 (PSSSPNSSSPSPSNWNNQQNAAWN) the composition is skewed to low complexity. 2 consecutive RRM domains span residues 375–466 (RKVF…PWNL) and 483–565 (KTIF…PYVL).

The protein belongs to the RRM CPEB family. In terms of assembly, following synaptic activity, forms amyloid-like oligomers. Aggregation requires an intact actin cytoskeleton. In terms of tissue distribution, in embryos, expressed in the central nervous system, and intermediate and distal pronephric tubule segments of the embryonic kidney.

Its subcellular location is the cytoplasm. The protein resides in the nucleus. It is found in the synapse. The protein localises to the cell projection. It localises to the dendrite. Its subcellular location is the postsynaptic density. In terms of biological role, sequence-specific RNA-binding protein which acts as a translational repressor in the basal unstimulated state but, following neuronal stimulation, acts as a translational activator. Does not bind to the cytoplasmic polyadenylation element (CPE), a uridine-rich sequence element within the mRNA 3'-UTR, but binds to a U-rich loop within a stem-loop structure. Required for the consolidation and maintenance of hippocampal-based long term memory. Inhibits differentiation of intermediate mesoderm from an early stage to inhibit pronephric differentiation but induce neural differentiation. The protein is Cytoplasmic polyadenylation element-binding protein 3 (cpeb3) of Xenopus tropicalis (Western clawed frog).